The sequence spans 848 residues: Dolabradiene synthase KSL4, chloroplastic (848 aa).

The N-terminal 64 residues, 1 to 64 (MASLSFASSH…SRMPRNVDTH (64 aa)), are a transit peptide targeting the chloroplast. A disordered region spans residues 148 to 168 (QRSDGSWGPDGGSGDHPSSPL). Mg(2+)-binding residues include D597, D601, N742, S746, and E750. Residues 597–601 (DDLFD) carry the DDXXD motif motif.

This sequence belongs to the terpene synthase family. Mg(2+) serves as cofactor.

The protein localises to the plastid. The protein resides in the chloroplast. The catalysed reaction is ent-copalyl diphosphate = dolabradiene + diphosphate. Functionally, involved in the production of antifungal dolabralexin phytoalexins in response to biotic and abiotic stresses. In response to fungal infection and in associtation with AN2, is involved in the production dolabradiene, a type of antifungal phytoalexin. Converts ent-copalyl disphosphate (ent-CPP) to dolabradiene. This is Dolabradiene synthase KSL4, chloroplastic from Zea mays (Maize).